The following is a 367-amino-acid chain: AA9 family lytic polysaccharide monooxygenase A (367 aa).

The N-terminal stretch at 1–20 (MKSSTFGMLALAAAAKLVSA) is a signal peptide. H21 serves as a coordination point for Cu(2+). Residues 37–56 (GNSESGYIRSPPSNSPITDV) are disordered. A disulfide bridge connects residues C63 and C183. H102 is a Cu(2+) binding site. H169 is an O2 binding site. Residue Y180 participates in Cu(2+) binding. A disordered region spans residues 234 to 287 (GASGSSSSPSASASASAPAATSAAPAPSSFTTIAKQPATSSTEAPSTENTSTTS). Low complexity-rich tracts occupy residues 235-262 (ASGS…APSS) and 270-287 (PATS…STTS). Residue N282 is glycosylated (N-linked (GlcNAc...) asparagine). One can recognise a CBM1 domain in the interval 329-365 (GAVKEWYQCGGLNYKGSTQCEEGLTCKKWNPYYYQCI).

It belongs to the polysaccharide monooxygenase AA9 family. The cofactor is Cu(2+).

The protein resides in the secreted. It carries out the reaction [(1-&gt;4)-beta-D-glucosyl]n+m + reduced acceptor + O2 = 4-dehydro-beta-D-glucosyl-[(1-&gt;4)-beta-D-glucosyl]n-1 + [(1-&gt;4)-beta-D-glucosyl]m + acceptor + H2O.. Its function is as follows. Lytic polysaccharide monooxygenase (LPMO) that depolymerizes crystalline and amorphous polysaccharides via the oxidation of scissile alpha- or beta-(1-4)-glycosidic bonds, yielding C4 oxidation products. Catalysis by LPMOs requires the reduction of the active-site copper from Cu(II) to Cu(I) by a reducing agent and H(2)O(2) or O(2) as a cosubstrate. Active on cellulose and cello-oligosaccharides, as well as plant cell wall-derived hemicellulosic polysaccharides. Also active on cello-oligosaccharides such as cellohexaose, cellopentaose or cellotetraose. This chain is AA9 family lytic polysaccharide monooxygenase A, found in Aspergillus oryzae (strain ATCC 42149 / RIB 40) (Yellow koji mold).